A 90-amino-acid chain; its full sequence is Acylphosphatase (90 aa).

One can recognise an Acylphosphatase-like domain in the interval 3–90 (NYKIIVFGTV…KTYNDFSVTY (88 aa)). Residues Arg-18 and Asn-36 contribute to the active site.

This sequence belongs to the acylphosphatase family.

It carries out the reaction an acyl phosphate + H2O = a carboxylate + phosphate + H(+). The protein is Acylphosphatase (acyP) of Ligilactobacillus salivarius (strain UCC118) (Lactobacillus salivarius).